Consider the following 129-residue polypeptide: Phosphoribosyl-AMP cyclohydrolase (129 aa).

Residue aspartate 87 coordinates Mg(2+). A Zn(2+)-binding site is contributed by cysteine 88. 2 residues coordinate Mg(2+): aspartate 89 and aspartate 91. Residues cysteine 104 and cysteine 111 each coordinate Zn(2+).

The protein belongs to the PRA-CH family. As to quaternary structure, homodimer. The cofactor is Mg(2+). It depends on Zn(2+) as a cofactor.

Its subcellular location is the cytoplasm. The enzyme catalyses 1-(5-phospho-beta-D-ribosyl)-5'-AMP + H2O = 1-(5-phospho-beta-D-ribosyl)-5-[(5-phospho-beta-D-ribosylamino)methylideneamino]imidazole-4-carboxamide. Its pathway is amino-acid biosynthesis; L-histidine biosynthesis; L-histidine from 5-phospho-alpha-D-ribose 1-diphosphate: step 3/9. Functionally, catalyzes the hydrolysis of the adenine ring of phosphoribosyl-AMP. This Ruegeria sp. (strain TM1040) (Silicibacter sp.) protein is Phosphoribosyl-AMP cyclohydrolase.